We begin with the raw amino-acid sequence, 640 residues long: Chaperone protein HtpG (640 aa).

The segment at 1 to 343 (MQTAENIEHL…SSDLPLNVSR (343 aa)) is a; substrate-binding. The tract at residues 344-564 (EILQESKDID…THDVSGNLGR (221 aa)) is b. A c region spans residues 565 to 640 (LLKSAGQKVP…LLLQNILSGK (76 aa)).

It belongs to the heat shock protein 90 family. In terms of assembly, homodimer.

Its subcellular location is the cytoplasm. Its function is as follows. Molecular chaperone. Has ATPase activity. This chain is Chaperone protein HtpG, found in Nitrosomonas europaea (strain ATCC 19718 / CIP 103999 / KCTC 2705 / NBRC 14298).